A 463-amino-acid polypeptide reads, in one-letter code: MPGMEYSTVSKIYGPLMIVQGVKGVAYGEVVEIETESGEKRKGQVLEAREDMAIVQVFEGTRDLDIKTTRVRFTGETLKVPVSMDMLGRIFNGIGKPIDGGPEIIPEDRRDVHGAPLNPVARAYPRDFIQTGISAIDGMNTLVRGQKLPIFSGSGLPHNMLAAQIARQAKVLGEEEQFAVVFAAMGITYEEANFFKKSFEETGAIERAVLFLNLADDPAIERIITPRMALTVAEYLAFDYDMQVLVILTDMTNYAEALREISAAREEVPGRRGYPGYMYTDLATIYERAGRVRGKKGSITQMPILTMPDDDITHPIPDLTGYITEGQIVLSRELHRKGIYPPIDVLPSLSRLMKDGIGKGRTREDHPQLSQQLYAAYAEGRSLRDLVAVVGEEALSETDRKYLKFADRFEREFVAQRYDEDRSIFETLDLGWELLAELPESELKRVRKEYILKYHPKYRKRGE.

This sequence belongs to the ATPase alpha/beta chains family. In terms of assembly, has multiple subunits with at least A(3), B(3), C, D, E, F, H, I and proteolipid K(x).

It is found in the cell membrane. In terms of biological role, component of the A-type ATP synthase that produces ATP from ADP in the presence of a proton gradient across the membrane. The B chain is a regulatory subunit. The sequence is that of A-type ATP synthase subunit B from Thermococcus sp. (strain KI).